The sequence spans 1305 residues: Contactin-associated protein-like 5 (1305 aa).

The first 24 residues, 1–24, serve as a signal peptide directing secretion; the sequence is MDSVPRLTGVFTLLLSGLWHLGSS. Residues 25-1236 lie on the Extracellular side of the membrane; it reads ATNYNCDDPL…PLTNAVRSDS (1212 aa). An F5/8 type C domain is found at 30-174; the sequence is CDDPLASLLS…IGMRVEVYGC (145 aa). An intrachain disulfide couples C30 to C174. 2 consecutive Laminin G-like domains span residues 180-360 and 367-544; these read VADF…TFSC and PITF…IDLC. N-linked (GlcNAc...) asparagine glycosylation is found at N282, N355, and N496. C329 and C360 are joined by a disulfide. 4 disulfide bridges follow: C512–C544, C550–C561, C555–C570, and C572–C582. The EGF-like 1 domain occupies 546–583; it reads IKDRCLPNYCEHGGFCSQSWTTFYCNCSNTGYTGATCH. One can recognise a Fibrinogen C-terminal domain in the interval 584-790; the sequence is NSLYEQSCEV…LRCYGDRHFW (207 aa). N-linked (GlcNAc...) asparagine glycosylation is present at N622. Residues 791–956 enclose the Laminin G-like 3 domain; the sequence is NAVSFYTEAS…KVTSGVRPGC (166 aa). 5 disulfide bridges follow: C929/C956, C960/C973, C967/C982, C984/C994, and C1163/C1198. The region spanning 957–995 is the EGF-like 2 domain; it reads PGHCSTYGSICHNGGKCVEKYSGYFCDCTNSPYEGPFCK. The region spanning 1000 to 1198 is the Laminin G-like 4 domain; that stretch reads AVFEAGTSVT…VQGTLMESSC (199 aa). A helical transmembrane segment spans residues 1237 to 1257; the sequence is AVIGGVIAVVIFIIFSIIGIM. Residues 1258 to 1305 are Cytoplasmic-facing; it reads TRFLYQHKQSHRTNQMKEKEYPENLDSSFRNDIDLQNTVSECKREYFI.

The protein belongs to the neurexin family.

It localises to the membrane. Its function is as follows. May play a role in the correct development and proper functioning of the peripheral and central nervous system and be involved in cell adhesion and intercellular communication. The chain is Contactin-associated protein-like 5 (CNTNAP5) from Canis lupus familiaris (Dog).